The following is a 318-amino-acid chain: NF-kappa-B inhibitor alpha (318 aa).

A disordered region spans residues 1–44; the sequence is MLSAHRPAEPPAVEGCEPPRKERQGGLLPPDDRHDSGLDSMKEE. The segment covering 17–44 has biased composition (basic and acidic residues); that stretch reads EPPRKERQGGLLPPDDRHDSGLDSMKEE. Lys-21 is covalently cross-linked (Glycyl lysine isopeptide (Lys-Gly) (interchain with G-Cter in ubiquitin)). Ser-36 bears the Phosphoserine; by IKKA and IKKB mark. A Phosphoserine; by IKKA, IKKB and IKKE modification is found at Ser-40. Position 46 is a phosphotyrosine; by Tyr-kinases (Tyr-46). ANK repeat units follow at residues 114-143, 147-176, 186-215, and 220-249; these read LSQT…DLDV, RGNT…PHHL, NGHT…DVNA, and NGRT…DVNK.

It belongs to the NF-kappa-B inhibitor family. Post-translationally, phosphorylated at Ser-36 and Ser-40 by IKKA/CHUK and IKKB/IKBKB; disables inhibition of NF-kappa-B DNA-binding activity. Phosphorylation at positions 36 and 40 is prerequisite to polyubiquitination and subsequent degradation. In terms of processing, monoubiquitinated at Lys-21 following phosphorylation at Ser-36 and Ser-40. The resulting polyubiquitination leads to protein degradation. Hydroxylated by HIF1AN. In terms of tissue distribution, highly expressed in lymph node, thymus followed by liver, brain, muscle, kidney, gastrointestinal and reproductive tract.

The protein resides in the cytoplasm. It is found in the nucleus. Its function is as follows. Inhibits the activity of dimeric NF-kappa-B/REL complexes by trapping REL (RELA/p65 and NFKB1/p50) dimers in the cytoplasm by masking their nuclear localization signals. On cellular stimulation by immune and pro-inflammatory responses, becomes phosphorylated promoting ubiquitination and degradation, enabling the dimeric RELA to translocate to the nucleus and activate transcription. The sequence is that of NF-kappa-B inhibitor alpha (NFKBIA) from Gallus gallus (Chicken).